The primary structure comprises 64 residues: uncharacterized protein (64 aa).

Transmembrane regions (helical) follow at residues 4–24 and 35–55; these read IYQY…WLAY and MYLN…TFGM.

It localises to the cell membrane. This is an uncharacterized protein from Bacillus subtilis (strain 168).